A 528-amino-acid polypeptide reads, in one-letter code: Major facilitator superfamily multidrug transporter mdr3 (528 aa).

Residues 1-37 (MLAMAASAEETNRQSNAGRRSVISPSEAPPEAEQSDV) are disordered. 7 consecutive transmembrane segments (helical) span residues 50–70 (FILILCSTQLFVQGAFGYILI), 91–111 (WHVGGYSLTVGTFILIAGKLG), 119–139 (ILVLGWAWFGVWSVIGGCSAF), 149–169 (ARALQGIGPALLLPNALAIAG), 180–200 (MIFSAFAVAAPLGCFTAGVVG), 211–231 (WVMWTYSIGCFIIAAVGLWVI), and 241–261 (AATLQFDYIGSVLGVAGLLLL). N-linked (GlcNAc...) asparagine glycosylation is present at Asn262. 5 helical membrane-spanning segments follow: residues 272–292 (GWSTPYVYVLLIGGFLVLGLF), 340–360 (VITSGWLMAIACAAFLGGCIL), 375–395 (FWSFVIMAWGMDISFPASTTI), 410–430 (SLVNTVINYSIAIGLGIAGTV), and 448–468 (ALWSSVGLAALAFGIALVFAV).

Belongs to the major facilitator superfamily.

The protein resides in the cell membrane. Its function is as follows. Major facilitator superfamily transporter that confers resistance to azoles such as itraconazole. This is Major facilitator superfamily multidrug transporter mdr3 from Aspergillus fumigatus (strain ATCC MYA-4609 / CBS 101355 / FGSC A1100 / Af293) (Neosartorya fumigata).